Reading from the N-terminus, the 190-residue chain is Inosine triphosphate pyrophosphatase (190 aa).

An ITP-binding site is contributed by 10–15 (TGNAKK). A Mg(2+)-binding site is contributed by E40. ITP is bound by residues K52, 68–69 (DT), K85, 144–147 (FGWD), K167, and 172–173 (HR).

Belongs to the HAM1 NTPase family. In terms of assembly, homodimer. Requires Mg(2+) as cofactor. Mn(2+) is required as a cofactor.

It localises to the cytoplasm. The enzyme catalyses ITP + H2O = IMP + diphosphate + H(+). The catalysed reaction is dITP + H2O = dIMP + diphosphate + H(+). It carries out the reaction XTP + H2O = XMP + diphosphate + H(+). Pyrophosphatase that hydrolyzes non-canonical purine nucleotides such as inosine triphosphate (ITP), deoxyinosine triphosphate (dITP) or xanthosine 5'-triphosphate (XTP) to their respective monophosphate derivatives. The enzyme does not distinguish between the deoxy- and ribose forms. Probably excludes non-canonical purines from RNA and DNA precursor pools, thus preventing their incorporation into RNA and DNA and avoiding chromosomal lesions. The sequence is that of Inosine triphosphate pyrophosphatase from Culex quinquefasciatus (Southern house mosquito).